We begin with the raw amino-acid sequence, 269 residues long: Hydroxyethylthiazole kinase (269 aa).

M43 is a binding site for substrate. Residues R119 and S165 each contribute to the ATP site. A192 provides a ligand contact to substrate.

Belongs to the Thz kinase family. It depends on Mg(2+) as a cofactor.

It carries out the reaction 5-(2-hydroxyethyl)-4-methylthiazole + ATP = 4-methyl-5-(2-phosphooxyethyl)-thiazole + ADP + H(+). Its pathway is cofactor biosynthesis; thiamine diphosphate biosynthesis; 4-methyl-5-(2-phosphoethyl)-thiazole from 5-(2-hydroxyethyl)-4-methylthiazole: step 1/1. Its function is as follows. Catalyzes the phosphorylation of the hydroxyl group of 4-methyl-5-beta-hydroxyethylthiazole (THZ). The polypeptide is Hydroxyethylthiazole kinase (Glaesserella parasuis serovar 5 (strain SH0165) (Haemophilus parasuis)).